The chain runs to 366 residues: Cytochrome c peroxidase, mitochondrial (366 aa).

The N-terminal 46 residues, 1–46 (MASAARSASRAFLRSTPTTSSFRPAVRAARFALPAQGFRAAGRRGY), are a transit peptide targeting the mitochondrion. His-127 functions as the Proton acceptor in the catalytic mechanism. Residue His-250 coordinates heme b. Residue Trp-266 is the Tryptophan radical intermediate of the active site.

Belongs to the peroxidase family. Cytochrome c peroxidase subfamily. In terms of assembly, forms a one-to-one complex with cytochrome c. Heme b serves as cofactor.

The protein localises to the mitochondrion matrix. The protein resides in the mitochondrion intermembrane space. It carries out the reaction 2 Fe(II)-[cytochrome c] + H2O2 + 2 H(+) = 2 Fe(III)-[cytochrome c] + 2 H2O. Functionally, destroys radicals which are normally produced within the cells and which are toxic to biological systems. The chain is Cytochrome c peroxidase, mitochondrial (ccp1) from Aspergillus fumigatus (strain ATCC MYA-4609 / CBS 101355 / FGSC A1100 / Af293) (Neosartorya fumigata).